The following is a 252-amino-acid chain: Triosephosphate isomerase (252 aa).

N10 to K12 serves as a coordination point for substrate. H96 functions as the Electrophile in the catalytic mechanism. Residue E168 is the Proton acceptor of the active site. Substrate contacts are provided by residues G174, S214, and G235–G236.

This sequence belongs to the triosephosphate isomerase family. Homodimer.

It is found in the cytoplasm. It carries out the reaction D-glyceraldehyde 3-phosphate = dihydroxyacetone phosphate. The protein operates within carbohydrate biosynthesis; gluconeogenesis. It participates in carbohydrate degradation; glycolysis; D-glyceraldehyde 3-phosphate from glycerone phosphate: step 1/1. Its function is as follows. Involved in the gluconeogenesis. Catalyzes stereospecifically the conversion of dihydroxyacetone phosphate (DHAP) to D-glyceraldehyde-3-phosphate (G3P). This Streptococcus mutans serotype c (strain ATCC 700610 / UA159) protein is Triosephosphate isomerase.